Reading from the N-terminus, the 198-residue chain is Ribonuclease HII (198 aa).

The 189-residue stretch at Q10–S198 folds into the RNase H type-2 domain. D16, E17, and D108 together coordinate a divalent metal cation.

This sequence belongs to the RNase HII family. Mn(2+) is required as a cofactor. It depends on Mg(2+) as a cofactor.

The protein localises to the cytoplasm. It catalyses the reaction Endonucleolytic cleavage to 5'-phosphomonoester.. Endonuclease that specifically degrades the RNA of RNA-DNA hybrids. This Escherichia coli O6:H1 (strain CFT073 / ATCC 700928 / UPEC) protein is Ribonuclease HII.